A 498-amino-acid chain; its full sequence is ATP synthase subunit beta, chloroplastic (498 aa).

An ATP-binding site is contributed by 172–179; sequence GGAGVGKT.

This sequence belongs to the ATPase alpha/beta chains family. As to quaternary structure, F-type ATPases have 2 components, CF(1) - the catalytic core - and CF(0) - the membrane proton channel. CF(1) has five subunits: alpha(3), beta(3), gamma(1), delta(1), epsilon(1). CF(0) has four main subunits: a(1), b(1), b'(1) and c(9-12).

It localises to the plastid. The protein resides in the chloroplast thylakoid membrane. The enzyme catalyses ATP + H2O + 4 H(+)(in) = ADP + phosphate + 5 H(+)(out). Produces ATP from ADP in the presence of a proton gradient across the membrane. The catalytic sites are hosted primarily by the beta subunits. In Morus indica (Mulberry), this protein is ATP synthase subunit beta, chloroplastic.